A 140-amino-acid chain; its full sequence is Large ribosomal subunit protein uL11 (140 aa).

Belongs to the universal ribosomal protein uL11 family. Part of the ribosomal stalk of the 50S ribosomal subunit. Interacts with L10 and the large rRNA to form the base of the stalk. L10 forms an elongated spine to which L12 dimers bind in a sequential fashion forming a multimeric L10(L12)X complex. Post-translationally, one or more lysine residues are methylated.

In terms of biological role, forms part of the ribosomal stalk which helps the ribosome interact with GTP-bound translation factors. The protein is Large ribosomal subunit protein uL11 of Dehalococcoides mccartyi (strain ATCC BAA-2266 / KCTC 15142 / 195) (Dehalococcoides ethenogenes (strain 195)).